The primary structure comprises 297 residues: UDP-N-acetylenolpyruvoylglucosamine reductase (297 aa).

The region spanning 24–189 is the FAD-binding PCMH-type domain; that stretch reads KVGGNAEIFF…LKAIFKVNKG (166 aa). The active site involves R169. The active-site Proton donor is the S218. E289 is an active-site residue.

Belongs to the MurB family. The cofactor is FAD.

The protein resides in the cytoplasm. The enzyme catalyses UDP-N-acetyl-alpha-D-muramate + NADP(+) = UDP-N-acetyl-3-O-(1-carboxyvinyl)-alpha-D-glucosamine + NADPH + H(+). It functions in the pathway cell wall biogenesis; peptidoglycan biosynthesis. In terms of biological role, cell wall formation. This chain is UDP-N-acetylenolpyruvoylglucosamine reductase, found in Rickettsia canadensis (strain McKiel).